Here is a 570-residue protein sequence, read N- to C-terminus: Peptidyl-prolyl cis-trans isomerase FKBP9 (570 aa).

An N-terminal signal peptide occupies residues 1-24 (MAFGARGWRRWSLLLLLLWVTGQA). PPIase FKBP-type domains follow at residues 54-142 (GDFV…VDIW), 166-254 (SDFV…LDLH), 278-365 (GDFL…IDFH), and 389-477 (GDYL…LELV). 4 N-linked (GlcNAc...) asparagine glycosylation sites follow: Asn-174, Asn-286, Asn-302, and Asn-397. EF-hand domains are found at residues 488–523 (WNGE…QVAS) and 533–568 (NAEM…TKHD). The Ca(2+) site is built by Asp-501, Asp-503, Asn-505, Glu-507, Glu-512, Asp-546, Asn-548, Asp-550, Lys-552, and Glu-557. Positions 567 to 570 (HDEL) match the Prevents secretion from ER motif.

Phosphorylated.

The protein resides in the endoplasmic reticulum lumen. It carries out the reaction [protein]-peptidylproline (omega=180) = [protein]-peptidylproline (omega=0). With respect to regulation, inhibited by FK506. In terms of biological role, PPIases accelerate the folding of proteins during protein synthesis. This chain is Peptidyl-prolyl cis-trans isomerase FKBP9 (Fkbp9), found in Rattus norvegicus (Rat).